The sequence spans 429 residues: Glucan 1,3-beta-glucosidase (429 aa).

The signal sequence occupies residues 1–19; that stretch reads MLSMQVVSLISLLVSVCLA. Residues 20-27 constitute a propeptide that is removed on maturation; it reads QPLPLSKR. Glutamate 215 functions as the Proton donor in the catalytic mechanism. Cystine bridges form between cysteine 299–cysteine 425 and cysteine 324–cysteine 354. The active-site Nucleophile is glutamate 316.

Belongs to the glycosyl hydrolase 5 (cellulase A) family.

It is found in the secreted. The catalysed reaction is Successive hydrolysis of beta-D-glucose units from the non-reducing ends of (1-&gt;3)-beta-D-glucans, releasing alpha-glucose.. Functionally, beta-glucanases participate in the metabolism of beta-glucan, the main structural component of the cell wall. It could also function biosynthetically as a transglycosylase. The sequence is that of Glucan 1,3-beta-glucosidase from Kluyveromyces lactis (strain ATCC 8585 / CBS 2359 / DSM 70799 / NBRC 1267 / NRRL Y-1140 / WM37) (Yeast).